The chain runs to 170 residues: Protein Rex (170 aa).

Basic residues predominate over residues 1-16; it reads MPKTRRQRTRRARRNR. Disordered stretches follow at residues 1–27 and 69–170; these read MPKT…SQDL and VQST…GEKP. A Nuclear localization signal, and RNA-binding (RxRE) motif is present at residues 2–19; that stretch reads PKTRRQRTRRARRNRPPT. Positions 57 to 71 are homomultimerization; that stretch reads PPAYIDMPSWPPVQS. Low complexity predominate over residues 82 to 95; it reads ALSALLSNTLSLAS. The short motif at 83–94 is the Nuclear export signal element; the sequence is LSALLSNTLSLA. The interval 124–132 is homomultimerization; sequence PSFNQCEST. A compositionally biased stretch (low complexity) spans 143 to 160; sequence PSGISSPPSPSPNLASVP. Phosphoserine; by host is present on residues S151 and S153. Residues 161–170 show a composition bias toward polar residues; the sequence is KTSTPPGEKP.

It belongs to the deltaretrovirus Rex protein family. As to quaternary structure, homomultimer. In terms of processing, phosphorylation is essential for RNA-binding and function.

It is found in the host nucleus. The protein resides in the host nucleolus. The protein localises to the host cytoplasm. Rex escorts unspliced gag-pro-pol and singly spliced env mRNAs out of the nucleus of infected cells. These mRNAs carry a recognition sequence called Rex responsive element (RxRE or XRE) located at the 3' region of the long terminal repeat (LTR). This function is essential since most HTLV proteins are translated from unspliced or partially spliced pre-mRNAs that cannot exit the nucleus by the pathway used by fully processed cellular mRNAs. The polypeptide is Protein Rex (Human T-cell leukemia virus 2 (HTLV-2)).